A 335-amino-acid polypeptide reads, in one-letter code: GTPase Obg (335 aa).

Positions 1 to 158 (MFLDQITIEL…RQVELELKLI (158 aa)) constitute an Obg domain. The OBG-type G domain maps to 159–334 (ADIGLVGFPN…LNSLFTNKLA (176 aa)). GTP-binding positions include 165-172 (GFPNAGKS), 190-194 (FTTLQ), 215-218 (DIPG), 285-288 (NKID), and 315-317 (SGL). Mg(2+) contacts are provided by S172 and T192.

Belongs to the TRAFAC class OBG-HflX-like GTPase superfamily. OBG GTPase family. As to quaternary structure, monomer. The cofactor is Mg(2+).

Its subcellular location is the cytoplasm. An essential GTPase (4.1 pmol GTP/min). Cannot substitute endogenous obg in E.coli, has a partially dominant-negative phenotype upon overexpression in liquid culture leading to decreased growth rate in a concentration-dependent fashion, with 50% of cells being elongated. Binds GTP, GDP and possibly (p)ppGpp with moderate affinity, with high nucleotide exchange rates and a fairly low GTP hydrolysis rate. It may play a role in control of the cell cycle, stress response, ribosome biogenesis and in those bacteria that undergo differentiation, in morphogenesis control. The protein is GTPase Obg of Chlamydia abortus (strain DSM 27085 / S26/3) (Chlamydophila abortus).